Consider the following 249-residue polypeptide: Tryptophan synthase alpha chain (249 aa).

Residues Glu-43 and Asp-54 each act as proton acceptor in the active site.

Belongs to the TrpA family. In terms of assembly, tetramer of two alpha and two beta chains.

The catalysed reaction is (1S,2R)-1-C-(indol-3-yl)glycerol 3-phosphate + L-serine = D-glyceraldehyde 3-phosphate + L-tryptophan + H2O. Its pathway is amino-acid biosynthesis; L-tryptophan biosynthesis; L-tryptophan from chorismate: step 5/5. Its function is as follows. The alpha subunit is responsible for the aldol cleavage of indoleglycerol phosphate to indole and glyceraldehyde 3-phosphate. This is Tryptophan synthase alpha chain from Campylobacter jejuni subsp. jejuni serotype O:6 (strain 81116 / NCTC 11828).